Consider the following 178-residue polypeptide: Ribosome maturation factor RimP (178 aa).

The protein belongs to the RimP family.

The protein localises to the cytoplasm. In terms of biological role, required for maturation of 30S ribosomal subunits. This is Ribosome maturation factor RimP from Streptococcus pyogenes serotype M3 (strain ATCC BAA-595 / MGAS315).